The chain runs to 672 residues: DNA ligase (672 aa).

NAD(+) is bound by residues 32–36 (DAEYD), 81–82 (SL), and E113. K115 serves as the catalytic N6-AMP-lysine intermediate. NAD(+)-binding residues include R136, E173, K290, and K314. Residues C408, C411, C426, and C432 each coordinate Zn(2+). In terms of domain architecture, BRCT spans 592-672 (EIDSPFAGKT…EMIRLLGESS (81 aa)).

It belongs to the NAD-dependent DNA ligase family. LigA subfamily. Mg(2+) is required as a cofactor. The cofactor is Mn(2+).

It catalyses the reaction NAD(+) + (deoxyribonucleotide)n-3'-hydroxyl + 5'-phospho-(deoxyribonucleotide)m = (deoxyribonucleotide)n+m + AMP + beta-nicotinamide D-nucleotide.. DNA ligase that catalyzes the formation of phosphodiester linkages between 5'-phosphoryl and 3'-hydroxyl groups in double-stranded DNA using NAD as a coenzyme and as the energy source for the reaction. It is essential for DNA replication and repair of damaged DNA. The chain is DNA ligase from Yersinia enterocolitica serotype O:8 / biotype 1B (strain NCTC 13174 / 8081).